The sequence spans 342 residues: MSKRVRSSLILPAVCGLGLAAVLLSSCSSKAPQQPARQAGISGPGDYSRPHRDGAPWWDVDVSRIPDAVPMPHNGSVKANPYTVLGKTYYPMNDARAYRMVGTASWYGTKFHGQATANGETYDLYGMTAAHKTLPLPSYVRVTNLDNGKSVIVRVNDRGPFYSDRVIDLSFAAAKKLGYAETGTARVKVEGIDPVQWWAQRGRPAPMVLAQPKQAVAQAAPAAAQTQAVAMAQPIETYTPPPAQHAAAVLPVQIDSKKNASLPADGLYLQVGAFANPDAAELLKAKLSGVTAAPVFISSVVRNQQILHRVRLGPIGSADEVSRTQDSIRVANLGQPTLVRPD.

Residues Met1 to Ser26 form the signal peptide. Cys27 carries the N-palmitoyl cysteine lipid modification. Residue Cys27 is the site of S-diacylglycerol cysteine attachment. The region spanning Ser261–Asp342 is the SPOR domain.

Belongs to the RlpA family.

The protein resides in the cell membrane. In terms of biological role, lytic transglycosylase with a strong preference for naked glycan strands that lack stem peptides. In Pseudomonas aeruginosa (strain ATCC 15692 / DSM 22644 / CIP 104116 / JCM 14847 / LMG 12228 / 1C / PRS 101 / PAO1), this protein is Endolytic peptidoglycan transglycosylase RlpA.